We begin with the raw amino-acid sequence, 325 residues long: Small ribosomal subunit protein uS4m (325 aa).

The S4 RNA-binding domain occupies 146–209; sequence KRIDMILLRS…HKQNLIHRLK (64 aa).

Belongs to the universal ribosomal protein uS4 family.

Its subcellular location is the mitochondrion. The sequence is that of Small ribosomal subunit protein uS4m (mrps4) from Dictyostelium citrinum (Slime mold).